The primary structure comprises 381 residues: Trans-enoyl reductase iliB (381 aa).

50–53 (VDGK) contacts NADP(+). 145–152 (ATLATVGL) provides a ligand contact to substrate. Residues 213–216 (SPGS), Tyr-231, and 278–279 (LD) each bind NADP(+). 298-302 (TYTQF) contacts substrate. Residue 367 to 368 (IS) coordinates NADP(+).

Belongs to the zinc-containing alcohol dehydrogenase family. In terms of assembly, monomer.

The catalysed reaction is N-[(4E,6E,10S,12Z,14E)-6,10-dimethyl-3-oxohexadeca-4,6,12,14-tetraenoyl]-L-tyrosyl-[ACP] = (3E,5S)-3-[(2E,4E,8S,10E,12Z)-1-hydroxy-4,8-dimethyltetradeca-2,4,10,12-tetraen-1-ylidene]-5-[(4-hydroxyphenyl)methyl]pyrrolidine-2,4-dione + holo-[ACP] + H(+). It participates in mycotoxin biosynthesis. Its function is as follows. Trans-enoyl reductase; part of the gene cluster that mediates the biosynthesis of ilicicolin H, a 4-hydroxy-2-pyridonealkaloid that has potent and broad antifungal activities by inhibiting the mitochondrial respiration chain. IliB collaborates with the hybrid PKS-NRPS synthetase iliA to assemble the backbone of ilicicolin H. The PKS portion of iliA and trans-acting enoyl reductase iliB work together to construct an octaketide, and two methyl groups are introduced by the MT domain of iliA during the chain assembly. The nascent chain is then condensed with tyrosine, catalyzed by the iliA C domain, and the resulting PKS-NRPS hybrid is offloaded by the iliA RED domain to form an advanced tetramic acid intermediate. The biosynthesis of ilicicolin H starts with formation of the tetramic acid by the hybrid PKS-NRPS synthetase iliA with the partnering trans-enoyl reductase iliB since iliA lacks a designated enoylreductase (ER) domain. The cytochrome P450 monooxygenase iliC then catalyzes the ring expansion of the tetramate to the acyclic 2-pyridone. The pericyclase iliD further converts the acyclic 2-pyridone into 8-epi-ilicicolin H. 8-epi-ilicicolin H might then spontaneously convert to ilicicolin H since ilicicolin H is produced in the absence of the epimerase iliE, in contrast to what was observed for the Talaromyces variabilis ilicolin H biosynthetic pathway. In Neonectria sp. (strain DH2), this protein is Trans-enoyl reductase iliB.